Here is a 379-residue protein sequence, read N- to C-terminus: Cytochrome b (379 aa).

The next 4 helical transmembrane spans lie at 33-53, 77-98, 113-133, and 178-198; these read FGSL…FLAM, WLIR…YFHI, WNMG…GYVL, and FFAF…IHLL. His83 and His97 together coordinate heme b. Positions 182 and 196 each coordinate heme b. Residue His201 coordinates a ubiquinone. Helical transmembrane passes span 226–246, 288–308, 320–340, and 347–367; these read IKDI…VMFS, LGGV…PILH, LSQC…WIGG, and FITI…ILMP.

The protein belongs to the cytochrome b family. In terms of assembly, the cytochrome bc1 complex contains 11 subunits: 3 respiratory subunits (MT-CYB, CYC1 and UQCRFS1), 2 core proteins (UQCRC1 and UQCRC2) and 6 low-molecular weight proteins (UQCRH/QCR6, UQCRB/QCR7, UQCRQ/QCR8, UQCR10/QCR9, UQCR11/QCR10 and a cleavage product of UQCRFS1). This cytochrome bc1 complex then forms a dimer. Requires heme b as cofactor.

It is found in the mitochondrion inner membrane. In terms of biological role, component of the ubiquinol-cytochrome c reductase complex (complex III or cytochrome b-c1 complex) that is part of the mitochondrial respiratory chain. The b-c1 complex mediates electron transfer from ubiquinol to cytochrome c. Contributes to the generation of a proton gradient across the mitochondrial membrane that is then used for ATP synthesis. This is Cytochrome b (MT-CYB) from Ctenomys leucodon (White-toothed tuco-tuco).